Consider the following 423-residue polypeptide: Glutamyl-tRNA reductase (423 aa).

Residues 49-52 (TCNR), serine 111, 116-118 (EPQ), and glutamine 122 each bind substrate. Cysteine 50 functions as the Nucleophile in the catalytic mechanism. NADP(+) is bound at residue 191–196 (GAGEMS).

It belongs to the glutamyl-tRNA reductase family. Homodimer.

It carries out the reaction (S)-4-amino-5-oxopentanoate + tRNA(Glu) + NADP(+) = L-glutamyl-tRNA(Glu) + NADPH + H(+). Its pathway is porphyrin-containing compound metabolism; protoporphyrin-IX biosynthesis; 5-aminolevulinate from L-glutamyl-tRNA(Glu): step 1/2. In terms of biological role, catalyzes the NADPH-dependent reduction of glutamyl-tRNA(Glu) to glutamate 1-semialdehyde (GSA). The chain is Glutamyl-tRNA reductase from Syntrophus aciditrophicus (strain SB).